The primary structure comprises 1505 residues: Anaphase-promoting complex subunit 1 (1505 aa).

This sequence belongs to the APC1 family. In terms of assembly, the APC/C complex is probably composed of at least 12 subunits: apc-2, apc-10, apc-11, cdc-26, emb-1, emb-27, emb-30, mat-1, mat-2, mat-3, such-1 and gfi-3.

Its pathway is protein modification; protein ubiquitination. Its function is as follows. Probable component of the anaphase promoting complex/cyclosome (APC/C), a cell cycle-regulated E3 ubiquitin ligase that controls progression through mitosis and the G1 phase of the cell cycle. The APC/C complex acts by mediating ubiquitination and subsequent degradation of target proteins. Developmental role in early embryogenesis and the metaphase to anaphase transition in oocyte and spermatocyte meiosis and mitosis in germ cells. Required for embryonic anterior-posterior axis formation. Plays a role in regulating the abundance of glr-1 receptors in postmitotic neurons, which may in turn control animal locomotion. Involved in regulating GABA neurotransmitter release at neuromuscular junctions in GABA motor neurons. The chain is Anaphase-promoting complex subunit 1 from Caenorhabditis elegans.